Consider the following 362-residue polypeptide: Peptide chain release factor 1 (362 aa).

An N5-methylglutamine modification is found at glutamine 237.

It belongs to the prokaryotic/mitochondrial release factor family. Methylated by PrmC. Methylation increases the termination efficiency of RF1.

The protein localises to the cytoplasm. Functionally, peptide chain release factor 1 directs the termination of translation in response to the peptide chain termination codons UAG and UAA. The polypeptide is Peptide chain release factor 1 (Vibrio campbellii (strain ATCC BAA-1116)).